A 311-amino-acid chain; its full sequence is Putative dihydroorotate dehydrogenase A (fumarate) (311 aa).

Residues K45, 69–73 (NSMGL), and N128 contribute to the substrate site. 45 to 46 (KT) contacts FMN. Position 128 (N128) interacts with FMN. Residue C131 is the Nucleophile of the active site. 2 residues coordinate FMN: K165 and V193. 194–195 (NS) contributes to the substrate binding site. Residues G220, 248 to 249 (GG), and 270 to 271 (GT) contribute to the FMN site.

This sequence belongs to the dihydroorotate dehydrogenase family. Type 1 subfamily. As to quaternary structure, homodimer. Requires FMN as cofactor.

The protein resides in the cytoplasm. It catalyses the reaction (S)-dihydroorotate + fumarate = orotate + succinate. The protein operates within pyrimidine metabolism; UMP biosynthesis via de novo pathway. Its function is as follows. Catalyzes the conversion of dihydroorotate to orotate with fumarate as the electron acceptor. This is Putative dihydroorotate dehydrogenase A (fumarate) (pyrD) from Streptococcus pyogenes serotype M5 (strain Manfredo).